Consider the following 442-residue polypeptide: ATP-dependent protease ATPase subunit HslU (442 aa).

Residues Ile-18, Gly-60–Glu-65, Asp-255, Glu-320, and Arg-392 contribute to the ATP site.

This sequence belongs to the ClpX chaperone family. HslU subfamily. As to quaternary structure, a double ring-shaped homohexamer of HslV is capped on each side by a ring-shaped HslU homohexamer. The assembly of the HslU/HslV complex is dependent on binding of ATP.

It localises to the cytoplasm. In terms of biological role, ATPase subunit of a proteasome-like degradation complex; this subunit has chaperone activity. The binding of ATP and its subsequent hydrolysis by HslU are essential for unfolding of protein substrates subsequently hydrolyzed by HslV. HslU recognizes the N-terminal part of its protein substrates and unfolds these before they are guided to HslV for hydrolysis. The protein is ATP-dependent protease ATPase subunit HslU of Hahella chejuensis (strain KCTC 2396).